The primary structure comprises 906 residues: Coatomer subunit beta' (906 aa).

6 WD repeats span residues 13 to 52, 55 to 94, 97 to 136, 140 to 180, 183 to 224, and 227 to 266; these read ARSD…LVKT, VCDL…RVHM, AHSD…SCSQ, GHTH…PNFT, GHEK…CVQT, and GHAQ…LEST. Position 627 is an N6-acetyllysine (Lys627). Positions 837 to 870 are disordered; it reads EEGKDFQPSRSTAQQELDGKPASPTPVIVASHTA. Ser859 bears the Phosphoserine mark. Residue Thr861 is modified to Phosphothreonine. A coiled-coil region spans residues 866–891; it reads ASHTANKEEKSLLELEVDLDNLELED.

It belongs to the WD repeat COPB2 family. Oligomeric complex that consists of at least the alpha, beta, beta', gamma, delta, epsilon and zeta subunits. Probably interacts with PEX11A. Interacts with SCYL1. Interacts with JAGN1.

It localises to the cytoplasm. The protein localises to the cytosol. The protein resides in the golgi apparatus membrane. Its subcellular location is the cytoplasmic vesicle. It is found in the COPI-coated vesicle membrane. Functionally, the coatomer is a cytosolic protein complex that binds to dilysine motifs and reversibly associates with Golgi non-clathrin-coated vesicles, which further mediate biosynthetic protein transport from the ER, via the Golgi up to the trans Golgi network. Coatomer complex is required for budding from Golgi membranes, and is essential for the retrograde Golgi-to-ER transport of dilysine-tagged proteins. In mammals, the coatomer can only be recruited by membranes associated to ADP-ribosylation factors (ARFs), which are small GTP-binding proteins; the complex also influences the Golgi structural integrity, as well as the processing, activity, and endocytic recycling of LDL receptors. Its function is as follows. This coatomer complex protein, essential for Golgi budding and vesicular trafficking, is a selective binding protein (RACK) for protein kinase C, epsilon type. It binds to Golgi membranes in a GTP-dependent manner. This chain is Coatomer subunit beta' (COPB2), found in Homo sapiens (Human).